The following is a 180-amino-acid chain: 5'(3')-deoxyribonucleotidase (180 aa).

Residue aspartate 9 is the Nucleophile of the active site. 3 residues coordinate Mg(2+): aspartate 9, aspartate 11, and aspartate 134. Aspartate 11 functions as the Proton donor in the catalytic mechanism.

It belongs to the 5'(3')-deoxyribonucleotidase family. Mg(2+) serves as cofactor.

In terms of biological role, dephosphorylates nucleoside monophosphates such as the 5' and 2'(3')-phosphates of deoxyribonucleotides in vitro. The sequence is that of 5'(3')-deoxyribonucleotidase from Clostridium acetobutylicum (strain ATCC 824 / DSM 792 / JCM 1419 / IAM 19013 / LMG 5710 / NBRC 13948 / NRRL B-527 / VKM B-1787 / 2291 / W).